The chain runs to 846 residues: Translation initiation factor IF-2 (846 aa).

A tr-type G domain is found at 345 to 512 (SRAPVVTIMG…AVLLQSEVLE (168 aa)). A G1 region spans residues 354–361 (GHVDHGKT). Residue 354-361 (GHVDHGKT) coordinates GTP. A G2 region spans residues 379–383 (GITQH). Residues 400 to 403 (DTPG) are G3. GTP contacts are provided by residues 400–404 (DTPGH) and 454–457 (NKID). The segment at 454-457 (NKID) is G4. The segment at 490 to 492 (SAK) is G5.

It belongs to the TRAFAC class translation factor GTPase superfamily. Classic translation factor GTPase family. IF-2 subfamily.

Its subcellular location is the cytoplasm. Its function is as follows. One of the essential components for the initiation of protein synthesis. Protects formylmethionyl-tRNA from spontaneous hydrolysis and promotes its binding to the 30S ribosomal subunits. Also involved in the hydrolysis of GTP during the formation of the 70S ribosomal complex. The polypeptide is Translation initiation factor IF-2 (Francisella tularensis subsp. holarctica (strain FTNF002-00 / FTA)).